A 57-amino-acid chain; its full sequence is Cytochrome b-c1 complex subunit 10, mitochondrial (57 aa).

Residues methionine 1–alanine 23 lie on the Mitochondrial matrix side of the membrane. A helical membrane pass occupies residues alanine 24–isoleucine 44. At lysine 45–lysine 57 the chain is on the mitochondrial intermembrane side.

This sequence belongs to the UQCR11/QCR10 family. In terms of assembly, component of the ubiquinol-cytochrome c oxidoreductase (cytochrome b-c1 complex, complex III, CIII), a multisubunit enzyme composed of 10 subunits. The complex is composed of 3 respiratory subunits cytochrome b (MT-CYB), cytochrome c1 (CYC1-1 or CYC1-2) and Rieske protein (UCR1-1 or UCR1-2), 2 core protein subunits MPPalpha1 (or MPPalpha2) and MPPB, and 5 low-molecular weight protein subunits QCR7-1 (or QCR7-2), UCRQ-1 (or UCRQ-2), QCR9, UCRY and probably QCR6-1 (or QCR6-2). The complex exists as an obligatory dimer and forms supercomplexes (SCs) in the inner mitochondrial membrane with NADH-ubiquinone oxidoreductase (complex I, CI), resulting in different assemblies (supercomplexes SCI(1)III(2) and SCI(2)III(4)).

It localises to the mitochondrion inner membrane. Functionally, component of the ubiquinol-cytochrome c oxidoreductase, a multisubunit transmembrane complex that is part of the mitochondrial electron transport chain which drives oxidative phosphorylation. The respiratory chain contains 3 multisubunit complexes succinate dehydrogenase (complex II, CII), ubiquinol-cytochrome c oxidoreductase (cytochrome b-c1 complex, complex III, CIII) and cytochrome c oxidase (complex IV, CIV), that cooperate to transfer electrons derived from NADH and succinate to molecular oxygen, creating an electrochemical gradient over the inner membrane that drives transmembrane transport and the ATP synthase. The cytochrome b-c1 complex catalyzes electron transfer from ubiquinol to cytochrome c, linking this redox reaction to translocation of protons across the mitochondrial inner membrane, with protons being carried across the membrane as hydrogens on the quinol. In the process called Q cycle, 2 protons are consumed from the matrix, 4 protons are released into the intermembrane space and 2 electrons are passed to cytochrome c. In Arabidopsis thaliana (Mouse-ear cress), this protein is Cytochrome b-c1 complex subunit 10, mitochondrial (UCRY).